A 222-amino-acid polypeptide reads, in one-letter code: MSSNNSNQDNFIRFALEAKVLSFGEFKTKAGRLSPYFFNAGGFNDGARLSALGRYYAKALQESNIQFDMLYGPAYKGITLAAATVIALADAGLNVPYAYNRKEAKDHGEGGVLVGAPVKGKVVIIDDVISAGTSVRESVDLIRKAGAEPTAVLIALDRMERSGTAAEIGAKSAVQAVEEEFGLPVISIANLTGVMSFLTASSDVQLSNYLPAVKAYRDKYGI.

K29 serves as a coordination point for 5-phospho-alpha-D-ribose 1-diphosphate. F37 to F38 is a binding site for orotate. 5-phospho-alpha-D-ribose 1-diphosphate is bound by residues Y75–K76, R101, K102, K105, H107, and D126–S134. Positions 130 and 158 each coordinate orotate.

It belongs to the purine/pyrimidine phosphoribosyltransferase family. PyrE subfamily. Homodimer. It depends on Mg(2+) as a cofactor.

The catalysed reaction is orotidine 5'-phosphate + diphosphate = orotate + 5-phospho-alpha-D-ribose 1-diphosphate. Its pathway is pyrimidine metabolism; UMP biosynthesis via de novo pathway; UMP from orotate: step 1/2. Functionally, catalyzes the transfer of a ribosyl phosphate group from 5-phosphoribose 1-diphosphate to orotate, leading to the formation of orotidine monophosphate (OMP). This chain is Orotate phosphoribosyltransferase, found in Polynucleobacter asymbioticus (strain DSM 18221 / CIP 109841 / QLW-P1DMWA-1) (Polynucleobacter necessarius subsp. asymbioticus).